The sequence spans 402 residues: Renin (402 aa).

The first 26 residues, 1–26 (MGGRRMPLWALLLLWTSCSFSLPTDT), serve as a signal peptide directing secretion. A propeptide spans 27-64 (ASFGRILLKKMPSVREILEERGVDMTRISAEWGEFIKK) (activation peptide). N-linked (GlcNAc...) asparagine glycosylation is present at asparagine 69. A Peptidase A1 domain is found at 84-399 (YYGEIGIGTP…DRHNNRIGFA (316 aa)). Aspartate 102 is a catalytic residue. Cysteine 115 and cysteine 122 are joined by a disulfide. Asparagine 139 carries N-linked (GlcNAc...) asparagine glycosylation. Cysteine 278 and cysteine 282 form a disulfide bridge. Aspartate 287 is an active-site residue. Residue asparagine 320 is glycosylated (N-linked (GlcNAc...) asparagine). A disulfide bridge connects residues cysteine 321 and cysteine 358.

It belongs to the peptidase A1 family. In terms of assembly, interacts with ATP6AP2.

Its subcellular location is the secreted. The protein resides in the membrane. The catalysed reaction is Cleavage of Leu-|-Xaa bond in angiotensinogen to generate angiotensin I.. Interaction with ATP6AP2 results in a 5-fold increased efficiency in angiotensinogen processing. Renin is a highly specific endopeptidase, whose only known function is to generate angiotensin I from angiotensinogen in the plasma, initiating a cascade of reactions that produce an elevation of blood pressure and increased sodium retention by the kidney. This is Renin (Ren1) from Rattus norvegicus (Rat).